The following is a 57-amino-acid chain: Small ribosomal subunit protein bS21 (57 aa).

The interval glutamate 31 to phenylalanine 57 is disordered. A compositionally biased stretch (basic residues) spans arginine 33–phenylalanine 57.

It belongs to the bacterial ribosomal protein bS21 family.

In Halalkalibacterium halodurans (strain ATCC BAA-125 / DSM 18197 / FERM 7344 / JCM 9153 / C-125) (Bacillus halodurans), this protein is Small ribosomal subunit protein bS21 (rpsU).